Here is a 457-residue protein sequence, read N- to C-terminus: Exodeoxyribonuclease 7 large subunit (457 aa).

Belongs to the XseA family. Heterooligomer composed of large and small subunits.

It localises to the cytoplasm. It carries out the reaction Exonucleolytic cleavage in either 5'- to 3'- or 3'- to 5'-direction to yield nucleoside 5'-phosphates.. Functionally, bidirectionally degrades single-stranded DNA into large acid-insoluble oligonucleotides, which are then degraded further into small acid-soluble oligonucleotides. This Photorhabdus laumondii subsp. laumondii (strain DSM 15139 / CIP 105565 / TT01) (Photorhabdus luminescens subsp. laumondii) protein is Exodeoxyribonuclease 7 large subunit.